Reading from the N-terminus, the 474-residue chain is tRNA-2-methylthio-N(6)-dimethylallyladenosine synthase (474 aa).

An MTTase N-terminal domain is found at 3–120 (KKLHIKTWGC…LPEMINSVRG (118 aa)). 6 residues coordinate [4Fe-4S] cluster: cysteine 12, cysteine 49, cysteine 83, cysteine 157, cysteine 161, and cysteine 164. Residues 143–375 (RADGPTAFVS…QDRINQQTTA (233 aa)) form the Radical SAM core domain. A TRAM domain is found at 378–441 (RRKLGTVQRI…ANSLRGMLLR (64 aa)).

This sequence belongs to the methylthiotransferase family. MiaB subfamily. In terms of assembly, monomer. It depends on [4Fe-4S] cluster as a cofactor.

The protein localises to the cytoplasm. It catalyses the reaction N(6)-dimethylallyladenosine(37) in tRNA + (sulfur carrier)-SH + AH2 + 2 S-adenosyl-L-methionine = 2-methylsulfanyl-N(6)-dimethylallyladenosine(37) in tRNA + (sulfur carrier)-H + 5'-deoxyadenosine + L-methionine + A + S-adenosyl-L-homocysteine + 2 H(+). Its function is as follows. Catalyzes the methylthiolation of N6-(dimethylallyl)adenosine (i(6)A), leading to the formation of 2-methylthio-N6-(dimethylallyl)adenosine (ms(2)i(6)A) at position 37 in tRNAs that read codons beginning with uridine. This is tRNA-2-methylthio-N(6)-dimethylallyladenosine synthase from Erwinia tasmaniensis (strain DSM 17950 / CFBP 7177 / CIP 109463 / NCPPB 4357 / Et1/99).